The primary structure comprises 165 residues: Large ribosomal subunit protein uL10 (165 aa).

This sequence belongs to the universal ribosomal protein uL10 family. Part of the ribosomal stalk of the 50S ribosomal subunit. The N-terminus interacts with L11 and the large rRNA to form the base of the stalk. The C-terminus forms an elongated spine to which L12 dimers bind in a sequential fashion forming a multimeric L10(L12)X complex.

Functionally, forms part of the ribosomal stalk, playing a central role in the interaction of the ribosome with GTP-bound translation factors. This is Large ribosomal subunit protein uL10 from Paraburkholderia phymatum (strain DSM 17167 / CIP 108236 / LMG 21445 / STM815) (Burkholderia phymatum).